Here is a 471-residue protein sequence, read N- to C-terminus: tRNA(Ile)-lysidine synthase (471 aa).

Residue 35 to 40 participates in ATP binding; that stretch reads SGGADS.

Belongs to the tRNA(Ile)-lysidine synthase family.

The protein localises to the cytoplasm. It carries out the reaction cytidine(34) in tRNA(Ile2) + L-lysine + ATP = lysidine(34) in tRNA(Ile2) + AMP + diphosphate + H(+). Ligates lysine onto the cytidine present at position 34 of the AUA codon-specific tRNA(Ile) that contains the anticodon CAU, in an ATP-dependent manner. Cytidine is converted to lysidine, thus changing the amino acid specificity of the tRNA from methionine to isoleucine. The sequence is that of tRNA(Ile)-lysidine synthase from Geobacter sulfurreducens (strain ATCC 51573 / DSM 12127 / PCA).